The sequence spans 300 residues: Alpha-ketoglutarate-dependent dioxygenase alkB homolog 4 (300 aa).

Position 2 is an N-acetylalanine (Ala2). The 125-residue stretch at Pro148–Ser272 folds into the Fe2OG dioxygenase domain. Fe cation contacts are provided by His167, Asp169, and His252. Arg263 contributes to the 2-oxoglutarate binding site.

The protein belongs to the alkB family. In terms of assembly, interacts with ZFHX3, MLLT3, MLLT1, HSF4, EP300, TES, EIF3C, MTMR6 and PSMA6. Fe(2+) is required as a cofactor.

The protein localises to the cytoplasm. It localises to the nucleus. The protein resides in the nucleolus. It is found in the midbody. It carries out the reaction an N(6)-methyl-2'-deoxyadenosine in DNA + 2-oxoglutarate + O2 = a 2'-deoxyadenosine in DNA + formaldehyde + succinate + CO2. The catalysed reaction is N(6)-methyl-L-lysyl-[protein] + 2-oxoglutarate + O2 = L-lysyl-[protein] + formaldehyde + succinate + CO2. In terms of biological role, dioxygenase that mediates demethylation of actin monomethylated at 'Lys-84' (K84me1), thereby acting as a regulator of actomyosin-processes. Demethylation of actin K84me1 is required for maintaining actomyosin dynamics supporting normal cleavage furrow ingression during cytokinesis and cell migration. In addition to proteins, also demethylates DNA: specifically demethylates DNA methylated on the 6th position of adenine (N(6)-methyladenosine) DNA, thereby regulating Polycomb silencing. In Mus musculus (Mouse), this protein is Alpha-ketoglutarate-dependent dioxygenase alkB homolog 4.